The following is a 132-amino-acid chain: MSYFKRNEGTIVFAFASIGFIAFYIINYYIRRCRNRAAAAGDIEEARMSPRRPPRGLDAEAIKSFPSFVYTEARGIEPGIGELECVVCLNEFKDDETLRLVPPCVHVFHADCVDIWLSHSSTCPICRAKVVP.

Residues 10–30 form a helical membrane-spanning segment; sequence TIVFAFASIGFIAFYIINYYI. An RING-type; atypical zinc finger spans residues 85–127; that stretch reads CVVCLNEFKDDETLRLVPPCVHVFHADCVDIWLSHSSTCPICR.

It belongs to the RING-type zinc finger family. ATL subfamily.

It localises to the membrane. It carries out the reaction S-ubiquitinyl-[E2 ubiquitin-conjugating enzyme]-L-cysteine + [acceptor protein]-L-lysine = [E2 ubiquitin-conjugating enzyme]-L-cysteine + N(6)-ubiquitinyl-[acceptor protein]-L-lysine.. The protein operates within protein modification; protein ubiquitination. This is RING-H2 finger protein ATL39 (ATL39) from Arabidopsis thaliana (Mouse-ear cress).